Reading from the N-terminus, the 174-residue chain is Acetolactate synthase small subunit (174 aa).

The region spanning 4–78 is the ACT domain; it reads TLSVLVQDEA…NILNVQDVTN (75 aa).

Belongs to the acetolactate synthase small subunit family. As to quaternary structure, dimer of large and small chains.

It localises to the plastid. Its subcellular location is the chloroplast. It catalyses the reaction 2 pyruvate + H(+) = (2S)-2-acetolactate + CO2. The protein operates within amino-acid biosynthesis; L-isoleucine biosynthesis; L-isoleucine from 2-oxobutanoate: step 1/4. Its pathway is amino-acid biosynthesis; L-valine biosynthesis; L-valine from pyruvate: step 1/4. The sequence is that of Acetolactate synthase small subunit (ilvH) from Pyropia yezoensis (Susabi-nori).